The chain runs to 212 residues: Imidazole glycerol phosphate synthase subunit HisH (212 aa).

Positions 4–210 (NIGIIDYGMG…LKWLHEKNSD (207 aa)) constitute a Glutamine amidotransferase type-1 domain. Cys82 serves as the catalytic Nucleophile. Active-site residues include His185 and Glu187.

As to quaternary structure, heterodimer of HisH and HisF.

It is found in the cytoplasm. The catalysed reaction is 5-[(5-phospho-1-deoxy-D-ribulos-1-ylimino)methylamino]-1-(5-phospho-beta-D-ribosyl)imidazole-4-carboxamide + L-glutamine = D-erythro-1-(imidazol-4-yl)glycerol 3-phosphate + 5-amino-1-(5-phospho-beta-D-ribosyl)imidazole-4-carboxamide + L-glutamate + H(+). It carries out the reaction L-glutamine + H2O = L-glutamate + NH4(+). It functions in the pathway amino-acid biosynthesis; L-histidine biosynthesis; L-histidine from 5-phospho-alpha-D-ribose 1-diphosphate: step 5/9. Its function is as follows. IGPS catalyzes the conversion of PRFAR and glutamine to IGP, AICAR and glutamate. The HisH subunit catalyzes the hydrolysis of glutamine to glutamate and ammonia as part of the synthesis of IGP and AICAR. The resulting ammonia molecule is channeled to the active site of HisF. This chain is Imidazole glycerol phosphate synthase subunit HisH, found in Prochlorococcus marinus (strain MIT 9211).